A 552-amino-acid chain; its full sequence is Chaperonin GroEL (552 aa).

Residues 30 to 33 (TLGP), K51, 87 to 91 (DGTTT), G415, and D496 each bind ATP.

The protein belongs to the chaperonin (HSP60) family. As to quaternary structure, forms a cylinder of 14 subunits composed of two heptameric rings stacked back-to-back. Interacts with the co-chaperonin GroES.

The protein localises to the cytoplasm. The enzyme catalyses ATP + H2O + a folded polypeptide = ADP + phosphate + an unfolded polypeptide.. Together with its co-chaperonin GroES, plays an essential role in assisting protein folding. The GroEL-GroES system forms a nano-cage that allows encapsulation of the non-native substrate proteins and provides a physical environment optimized to promote and accelerate protein folding. The sequence is that of Chaperonin GroEL from Paramagnetospirillum magneticum (strain ATCC 700264 / AMB-1) (Magnetospirillum magneticum).